Consider the following 429-residue polypeptide: MIELDINASDKSLSHRAVIFSLLAQKPCFVRNFLMGEDCLSSLEIAQNLGAKVENTAKNSFKITPPTTIKEPNKILNCNNSGTTMRLYSGLLSAQKGLFVLSGDNSLNARPMKRIIEPLKAFGAKILGREDNHFAPLVILGSPLKACHYESPIASAQVKSAFILSALQAQGASTYKESELSRNHTEIMLKSLGADIHNQDGVLKISPLEKPLEAFDFTIANDPSSAFFFALACAITPKSRLLLKNVLLNPTRIEAFEVLKKMGASIEYAIQSKDLEMIGDIYVEHAPLKAINIDQNIASLIDEIPALSIAMLFAKGKSMVKNAKDLRAKESDRIKAVVSNFKALGIECEEFEDGFYVEGLEDISPLKQRFSRIKPPLIKSFNDHRIAMSFAVLTLALPLEIDNLECANISFPQFKHLLNQFKKGSLNGN.

The 3-phosphoshikimate site is built by Lys11, Ser12, and Arg16. Lys11 contributes to the phosphoenolpyruvate binding site. The phosphoenolpyruvate site is built by Gly82 and Arg110. Ser155, Gln157, Asp302, and Lys329 together coordinate 3-phosphoshikimate. Gln157 contacts phosphoenolpyruvate. Residue Asp302 is the Proton acceptor of the active site. 2 residues coordinate phosphoenolpyruvate: Arg333 and Arg385.

The protein belongs to the EPSP synthase family. In terms of assembly, monomer.

Its subcellular location is the cytoplasm. It carries out the reaction 3-phosphoshikimate + phosphoenolpyruvate = 5-O-(1-carboxyvinyl)-3-phosphoshikimate + phosphate. The protein operates within metabolic intermediate biosynthesis; chorismate biosynthesis; chorismate from D-erythrose 4-phosphate and phosphoenolpyruvate: step 6/7. Its function is as follows. Catalyzes the transfer of the enolpyruvyl moiety of phosphoenolpyruvate (PEP) to the 5-hydroxyl of shikimate-3-phosphate (S3P) to produce enolpyruvyl shikimate-3-phosphate and inorganic phosphate. The protein is 3-phosphoshikimate 1-carboxyvinyltransferase of Helicobacter pylori (strain ATCC 700392 / 26695) (Campylobacter pylori).